The chain runs to 990 residues: Translation initiation factor IF-2 (990 aa).

A disordered region spans residues 92 to 402 (KKRTFVKRDD…QRDEHLQAAP (311 aa)). 2 stretches are compositionally biased toward low complexity: residues 104–116 (EGAA…AAFA) and 131–151 (EAPA…AAPA). Residues 158–201 (ELARREEQARHQAELIRRQEAELAAKRAAREAREKREREAEERA) show a composition bias toward basic and acidic residues. Residues 223–243 (TREQAAEATARNAAQLQARAK) are compositionally biased toward low complexity. Residues 244–264 (AAAESKARSDEEAARAADLDA) show a composition bias toward basic and acidic residues. Composition is skewed to low complexity over residues 281–290 (ATPKKAVMVA) and 318–342 (PAVG…PGAG). Basic and acidic residues-rich tracts occupy residues 358-368 (PAKKKEIKTRG) and 386-398 (RRGD…DEHL). The region spanning 490 to 659 (PRAPVVTVMG…LLQADVMELK (170 aa)) is the tr-type G domain. The tract at residues 499–506 (GHVDHGKT) is G1. A GTP-binding site is contributed by 499-506 (GHVDHGKT). A G2 region spans residues 524–528 (GITQH). A G3 region spans residues 545–548 (DTPG). Residues 545 to 549 (DTPGH) and 599 to 602 (TKAD) each bind GTP. The interval 599-602 (TKAD) is G4. The segment at 635–637 (SSK) is G5.

Belongs to the TRAFAC class translation factor GTPase superfamily. Classic translation factor GTPase family. IF-2 subfamily.

The protein resides in the cytoplasm. Functionally, one of the essential components for the initiation of protein synthesis. Protects formylmethionyl-tRNA from spontaneous hydrolysis and promotes its binding to the 30S ribosomal subunits. Also involved in the hydrolysis of GTP during the formation of the 70S ribosomal complex. This Verminephrobacter eiseniae (strain EF01-2) protein is Translation initiation factor IF-2.